We begin with the raw amino-acid sequence, 197 residues long: Putative peptidyl-prolyl cis-trans isomerase (197 aa).

The 182-residue stretch at 14–195 (NEIKLIMHTN…HDITIDSIEI (182 aa)) folds into the PPIase cyclophilin-type domain.

Belongs to the cyclophilin-type PPIase family.

The catalysed reaction is [protein]-peptidylproline (omega=180) = [protein]-peptidylproline (omega=0). Functionally, PPIases accelerate the folding of proteins. It catalyzes the cis-trans isomerization of proline imidic peptide bonds in oligopeptides. This chain is Putative peptidyl-prolyl cis-trans isomerase, found in Staphylococcus saprophyticus subsp. saprophyticus (strain ATCC 15305 / DSM 20229 / NCIMB 8711 / NCTC 7292 / S-41).